The chain runs to 209 residues: Large ribosomal subunit protein uL3 (209 aa).

Gln-150 bears the N5-methylglutamine mark.

The protein belongs to the universal ribosomal protein uL3 family. Part of the 50S ribosomal subunit. Forms a cluster with proteins L14 and L19. Post-translationally, methylated by PrmB.

Functionally, one of the primary rRNA binding proteins, it binds directly near the 3'-end of the 23S rRNA, where it nucleates assembly of the 50S subunit. The sequence is that of Large ribosomal subunit protein uL3 from Escherichia coli O139:H28 (strain E24377A / ETEC).